The following is a 260-amino-acid chain: Phosphate import ATP-binding protein PstB (260 aa).

One can recognise an ABC transporter domain in the interval 14–255 (IETENLNLFY…PKNTKTEEYI (242 aa)). Position 46–53 (46–53 (GPSGCGKS)) interacts with ATP.

It belongs to the ABC transporter superfamily. Phosphate importer (TC 3.A.1.7) family. As to quaternary structure, the complex is composed of two ATP-binding proteins (PstB), two transmembrane proteins (PstC and PstA) and a solute-binding protein (PstS).

The protein resides in the cell inner membrane. It catalyses the reaction phosphate(out) + ATP + H2O = ADP + 2 phosphate(in) + H(+). Its function is as follows. Part of the ABC transporter complex PstSACB involved in phosphate import. Responsible for energy coupling to the transport system. The chain is Phosphate import ATP-binding protein PstB from Borreliella afzelii (strain PKo) (Borrelia afzelii).